A 486-amino-acid chain; its full sequence is ATP-dependent rRNA helicase rrp3 (486 aa).

Positions 1–60 are disordered; the sequence is MSSVKRRKTDKNPSLEGLKSKKTKESKKESHTPSPEPIEDTEDNRVIEETEEAEEDDAPK. A Q motif motif is present at residues 60-88; that stretch reads KSFKDLGIVDSLCEACDTLGYKAPTPIQR. The 172-residue stretch at 91 to 262 folds into the Helicase ATP-binding domain; it reads IPLALQGRDL…RASLKDPLRV (172 aa). 104–111 contacts ATP; it reads AETGSGKT. A DEAD box motif is present at residues 210–213; sequence DEAD. Residues 286–434 enclose the Helicase C-terminal domain; sequence HKDTYLIYLL…EYPTVKDEVM (149 aa). Composition is skewed to basic and acidic residues over residues 447-460 and 476-486; these read ARNE…DRGK and RGRDEMDREEG. A disordered region spans residues 447 to 486; that stretch reads ARNEMKNLHEDRGKKGAVLKGRRPANGAKRGRDEMDREEG.

This sequence belongs to the DEAD box helicase family. DDX47/RRP3 subfamily. Interacts with the SSU processome.

It is found in the nucleus. The enzyme catalyses ATP + H2O = ADP + phosphate + H(+). Its function is as follows. ATP-dependent rRNA helicase required for pre-ribosomal RNA processing. Involved in the maturation of the 35S-pre-rRNA and to its cleavage to mature 18S rRNA. This is ATP-dependent rRNA helicase rrp3 from Botryotinia fuckeliana (strain B05.10) (Noble rot fungus).